The primary structure comprises 695 residues: UvrABC system protein B (695 aa).

The 152-residue stretch at 25 to 176 (KSISEGHRFQ…NQRDVLRDLA (152 aa)) folds into the Helicase ATP-binding domain. 38–45 (GATGTGKT) serves as a coordination point for ATP. Residues 91–114 (YYDYYQPEAYVPSTDTYIAKSSSI) carry the Beta-hairpin motif. Positions 454–617 (LLGEIYLRLE…ITPKPIVKKN (164 aa)) constitute a Helicase C-terminal domain. The 36-residue stretch at 652–687 (PELIGQLELKMKEAAKNLEFEEAAQLRDRIKKLRQR) folds into the UVR domain.

This sequence belongs to the UvrB family. In terms of assembly, forms a heterotetramer with UvrA during the search for lesions. Interacts with UvrC in an incision complex.

The protein localises to the cytoplasm. Functionally, the UvrABC repair system catalyzes the recognition and processing of DNA lesions. A damage recognition complex composed of 2 UvrA and 2 UvrB subunits scans DNA for abnormalities. Upon binding of the UvrA(2)B(2) complex to a putative damaged site, the DNA wraps around one UvrB monomer. DNA wrap is dependent on ATP binding by UvrB and probably causes local melting of the DNA helix, facilitating insertion of UvrB beta-hairpin between the DNA strands. Then UvrB probes one DNA strand for the presence of a lesion. If a lesion is found the UvrA subunits dissociate and the UvrB-DNA preincision complex is formed. This complex is subsequently bound by UvrC and the second UvrB is released. If no lesion is found, the DNA wraps around the other UvrB subunit that will check the other stand for damage. The sequence is that of UvrABC system protein B from Synechococcus sp. (strain JA-2-3B'a(2-13)) (Cyanobacteria bacterium Yellowstone B-Prime).